The chain runs to 525 residues: Cyclic AMP-responsive element-binding protein 3-like protein 2 (525 aa).

Residues 1 to 382 (MEIMESGDPV…SCKAAGTQTG (382 aa)) lie on the Cytoplasmic side of the membrane. Disordered regions lie at residues 85-104 (LCGDSRPQSPFTHASSDDNF), 203-267 (EALQ…QGSG), and 309-338 (NKISAQESRRKKKEYMDSLEKRVENSSSEN). 2 stretches are compositionally biased toward polar residues: residues 90 to 102 (RPQSPFTHASSDD) and 213 to 239 (SSHGSDSEGGQSPTRSLPPSSPVQSQA). The bZIP domain maps to 299–362 (ALKKIRRKIK…RTLLQQLQRL (64 aa)). A basic motif region spans residues 301 to 330 (KKIRRKIKNKISAQESRRKKKEYMDSLEKR). Residues 322-332 (EYMDSLEKRVE) are compositionally biased toward basic and acidic residues. The leucine-zipper stretch occupies residues 341–362 (LRKKVEVLESTNRTLLQQLQRL). Residues 383-403 (TCLMMVVLCFAVIFGSFTQNL) traverse the membrane as a helical; Signal-anchor for type II membrane protein segment. Over 404–525 (DMYSSSSKTI…ELDRTVNTTS (122 aa)) the chain is Lumenal. Residues 433 to 436 (RKLL) carry the S1P recognition motif. N-linked (GlcNAc...) asparagine glycosylation is found at Asn490, Asn509, and Asn522.

The protein belongs to the bZIP family. ATF subfamily. In terms of assembly, binds DNA as a dimer. In terms of processing, upon ER stress, translocated to the Golgi apparatus, where it is processed by regulated intramembrane proteolysis (RIP) to release the cytosol-facing N-terminal transcription factor domain. The cleavage is performed sequentially by site-1 and site-2 proteases (S1P/mbtps1 and S2P/mbtps2).

The protein resides in the endoplasmic reticulum membrane. The protein localises to the nucleus. Its function is as follows. Transcription factor involved in unfolded protein response (UPR). In the absence of endoplasmic reticulum (ER) stress, inserted into ER membranes, with N-terminal DNA-binding and transcription activation domains oriented toward the cytosolic face of the membrane. In response to ER stress, transported to the Golgi, where it is cleaved in a site-specific manner by resident proteases S1P/mbtps1 and S2P/mbtps2. The released N-terminal cytosolic domain is translocated to the nucleus to effect transcription of specific target genes. Plays a critical role in chondrogenesis. May protect neuroblastoma cells from ER stress-induced death. In vitro activates transcription of target genes via direct binding to the CRE site. The protein is Cyclic AMP-responsive element-binding protein 3-like protein 2 (creb3l2) of Xenopus laevis (African clawed frog).